A 42-amino-acid chain; its full sequence is Photosystem I reaction center subunit IX (42 aa).

A helical membrane pass occupies residues 7-27 (YLSTAPVIATIWFGFLAGLLI).

This sequence belongs to the PsaJ family.

It localises to the plastid. Its subcellular location is the chloroplast thylakoid membrane. Its function is as follows. May help in the organization of the PsaE and PsaF subunits. The sequence is that of Photosystem I reaction center subunit IX from Chaetosphaeridium globosum (Charophycean green alga).